Consider the following 209-residue polypeptide: Guanylyl cyclase-activating protein 3 (209 aa).

Gly-2 is lipidated: N-myristoyl glycine. A Deamidated asparagine modification is found at Asn-3. EF-hand domains are found at residues 15–50 (PTQE…QGLN), 52–87 (KANK…IMQE), 88–123 (KMEQ…VQAL), and 130–165 (SPEE…DQDL). Ca(2+) is bound by residues Asp-65, Asn-67, Asp-69, Glu-76, Asp-101, Asp-103, Asn-105, Ser-107, Glu-112, Asp-143, Asn-145, Asp-147, Glu-149, and Glu-154. The interval 187-209 (QPDMETDSSKSPDKAGLGKVKMK) is disordered.

As to expression, retina.

Its function is as follows. Stimulates guanylyl cyclase 1 (GC1) and GC2 when free calcium ions concentration is low and inhibits guanylyl cyclases when free calcium ions concentration is elevated. This Ca(2+)-sensitive regulation of guanylyl cyclase (GC) is a key event in recovery of the dark state of rod photoreceptors following light exposure. The chain is Guanylyl cyclase-activating protein 3 (GUCA1C) from Homo sapiens (Human).